A 766-amino-acid polypeptide reads, in one-letter code: 5-methyltetrahydropteroyltriglutamate--homocysteine methyltransferase (766 aa).

Residues 16–19 (RELK) and lysine 119 contribute to the 5-methyltetrahydropteroyltri-L-glutamate site. L-homocysteine is bound by residues 440-442 (IGS) and glutamate 493. L-methionine-binding positions include 440–442 (IGS) and glutamate 493. 5-methyltetrahydropteroyltri-L-glutamate is bound by residues 524 to 525 (RC) and tryptophan 570. Aspartate 608 contacts L-homocysteine. An L-methionine-binding site is contributed by aspartate 608. Position 614 (glutamate 614) interacts with 5-methyltetrahydropteroyltri-L-glutamate. 3 residues coordinate Zn(2+): histidine 650, cysteine 652, and glutamate 674. The Proton donor role is filled by histidine 703. Cysteine 735 contacts Zn(2+).

The protein belongs to the vitamin-B12 independent methionine synthase family. Zn(2+) is required as a cofactor.

The catalysed reaction is 5-methyltetrahydropteroyltri-L-glutamate + L-homocysteine = tetrahydropteroyltri-L-glutamate + L-methionine. It functions in the pathway amino-acid biosynthesis; L-methionine biosynthesis via de novo pathway; L-methionine from L-homocysteine (MetE route): step 1/1. Its function is as follows. Catalyzes the transfer of a methyl group from 5-methyltetrahydrofolate to homocysteine resulting in methionine formation. The polypeptide is 5-methyltetrahydropteroyltriglutamate--homocysteine methyltransferase (Pseudomonas aeruginosa (strain ATCC 15692 / DSM 22644 / CIP 104116 / JCM 14847 / LMG 12228 / 1C / PRS 101 / PAO1)).